A 353-amino-acid polypeptide reads, in one-letter code: UPF0283 membrane protein YcjF (353 aa).

Residues 1–19 are compositionally biased toward basic and acidic residues; the sequence is MSEPLKPRIDFAEPLKEEP. Residues 1-35 form a disordered region; sequence MSEPLKPRIDFAEPLKEEPTSAFKAQQTFSEAESR. A run of 3 helical transmembrane segments spans residues 70–90, 100–120, and 213–233; these read MVMGGLALFGASVVGQGIQWT, VALGGCAAGALIVGAGVGSVV, and ESTLMIAVSPLALVDMAFIAW.

It belongs to the UPF0283 family.

It localises to the cell inner membrane. The polypeptide is UPF0283 membrane protein YcjF (Salmonella agona (strain SL483)).